A 262-amino-acid polypeptide reads, in one-letter code: Tryptophan synthase alpha chain (262 aa).

Active-site proton acceptor residues include E51 and D62.

It belongs to the TrpA family. As to quaternary structure, tetramer of two alpha and two beta chains.

The catalysed reaction is (1S,2R)-1-C-(indol-3-yl)glycerol 3-phosphate + L-serine = D-glyceraldehyde 3-phosphate + L-tryptophan + H2O. It functions in the pathway amino-acid biosynthesis; L-tryptophan biosynthesis; L-tryptophan from chorismate: step 5/5. The alpha subunit is responsible for the aldol cleavage of indoleglycerol phosphate to indole and glyceraldehyde 3-phosphate. This Oceanobacillus iheyensis (strain DSM 14371 / CIP 107618 / JCM 11309 / KCTC 3954 / HTE831) protein is Tryptophan synthase alpha chain.